We begin with the raw amino-acid sequence, 554 residues long: Estrogen receptor beta (554 aa).

The segment at Thr25–Phe173 is modulating. NR C4-type zinc fingers lie at residues Cys174–Cys194 and Cys210–Cys234. The nuclear receptor DNA-binding region spans Cys174–Met239. In terms of domain architecture, NR LBD spans Ser289–His521. Residues Pro529–Gln554 form a disordered region.

Belongs to the nuclear hormone receptor family. NR3 subfamily. Binds DNA as a homodimer. Can form a heterodimer with ER-alpha. As to expression, brain, pituitary, skeletal muscle, liver, adrenal, kidney, intestine and ovary.

It is found in the nucleus. Functionally, binds estrogens with an affinity similar to that of ER-alpha, and activates expression of reporter genes containing estrogen response elements (ERE) in an estrogen-dependent manner. Locally synthesized estrogens may act via ER beta, in addition to ER alpha, to mediate seasonal or developmental effects on nearby song nuclei. This chain is Estrogen receptor beta (ESR2), found in Sturnus vulgaris (Starling).